The sequence spans 593 residues: Aspartate--tRNA ligase (593 aa).

Glutamate 173 contacts L-aspartate. An aspartate region spans residues 197–200 (QLFK). An L-aspartate-binding site is contributed by arginine 219. ATP contacts are provided by residues 219–221 (RDE) and glutamine 228. Histidine 449 provides a ligand contact to L-aspartate. Glutamate 483 contributes to the ATP binding site. An L-aspartate-binding site is contributed by arginine 490. Residue 535–538 (GLDR) coordinates ATP.

The protein belongs to the class-II aminoacyl-tRNA synthetase family. Type 1 subfamily. As to quaternary structure, homodimer.

It is found in the cytoplasm. The enzyme catalyses tRNA(Asp) + L-aspartate + ATP = L-aspartyl-tRNA(Asp) + AMP + diphosphate. Functionally, catalyzes the attachment of L-aspartate to tRNA(Asp) in a two-step reaction: L-aspartate is first activated by ATP to form Asp-AMP and then transferred to the acceptor end of tRNA(Asp). In Shewanella piezotolerans (strain WP3 / JCM 13877), this protein is Aspartate--tRNA ligase.